The primary structure comprises 274 residues: NH(3)-dependent NAD(+) synthetase (274 aa).

46–53 (GISGGQDS) provides a ligand contact to ATP. Asp52 provides a ligand contact to Mg(2+). Arg140 provides a ligand contact to deamido-NAD(+). Thr160 lines the ATP pocket. Glu165 provides a ligand contact to Mg(2+). 2 residues coordinate deamido-NAD(+): Lys173 and Asp180. Residues Lys189 and Thr211 each contribute to the ATP site. 260–261 (HK) is a binding site for deamido-NAD(+).

The protein belongs to the NAD synthetase family. In terms of assembly, homodimer.

It carries out the reaction deamido-NAD(+) + NH4(+) + ATP = AMP + diphosphate + NAD(+) + H(+). It functions in the pathway cofactor biosynthesis; NAD(+) biosynthesis; NAD(+) from deamido-NAD(+) (ammonia route): step 1/1. Its function is as follows. Catalyzes the ATP-dependent amidation of deamido-NAD to form NAD. Uses ammonia as a nitrogen source. This Streptococcus equi subsp. zooepidemicus (strain MGCS10565) protein is NH(3)-dependent NAD(+) synthetase.